Consider the following 439-residue polypeptide: Histone acetyltransferase GCN5 (439 aa).

Basic and acidic residues-rich tracts occupy residues 1-28 (MVTK…KLEN) and 39-59 (ETNK…KETE). The interval 1–59 (MVTKHQIEEDHLDGATTDPEVKRVKLENNVEEIQPEQAETNKQEGTDKENKGKFEKETE) is disordered. Residues 100–255 (IEFRVVNNDN…GGTLMQCSML (156 aa)) enclose the N-acetyltransferase domain. The active-site Proton donor/acceptor is the glutamate 173. Acetyl-CoA is bound by residues 177-179 (CAI), 184-190 (QVRGYGA), and 216-219 (YAIG). The 105-residue stretch at 327-431 (PKRGPHDAAI…KFFNNKVKEI (105 aa)) folds into the Bromo domain.

It belongs to the acetyltransferase family. GCN5 subfamily. As to quaternary structure, component of the 1.8 MDa SAGA (Spt-Ada-Gcn5 acetyltransferase) complex, which is composed of 19 subunits TRA1, SPT7, TAF5, NGG1/ADA3, SGF73, SPT20/ADA5, SPT8, TAF12, TAF6, HFI1/ADA1, UBP8, GCN5, ADA2, SPT3, SGF29, TAF10, TAF9, SGF11 and SUS1. The SAGA complex is composed of 4 modules, namely the HAT (histone acetyltransferase) module (GCN5, ADA2, NGG1/ADA3 and SGF29), the DUB (deubiquitinating) module (UBP8, SGF11, SGF73 and SUS1), the core or TAF (TBP-associated factor) module (TAF5, TAF6, TAF9, TAF10 and TAF12), and the Tra1 or SPT (Suppressor of Ty) module (TRA1, HFI1/ADA1, SPT3, SPT7, SPT8 and SPT20/ADA5). The Tra1/SPT module binds activators, the core module recruits TBP (TATA-binding protein), the HAT module contains the histone H3 acetyltransferase GCN5, and the DUB module comprises the histone H2B deubiquitinase UBP8. Also identified in an altered form of SAGA, named SALSA (SAGA altered, Spt8 absent) or SLIK (SAGA-like) complex, which contains a C-terminal truncated form of SPT7 and is missing SPT8. However, it has been shown that the SAGA and SAGA-like SALSA/SLIK transcriptional coactivators are structurally and biochemically equivalent. Component of the 0.8 MDa ADA complex, a HAT complex distinct from SAGA, which at least consists of ADA2, NGG1/ADA3, AHC1, AHC2, SGF29 and GCN5. Component of an ADA/GCN5 complex that consists of HFI1/ADA1, ADA2, NGG1/ADA3, SPT20/ADA5 and GCN5 and probably is a subcomplex of SAGA.

The protein localises to the nucleus. It is found in the cytoplasm. The catalysed reaction is L-lysyl-[protein] + acetyl-CoA = N(6)-acetyl-L-lysyl-[protein] + CoA + H(+). It catalyses the reaction (2E)-butenoyl-CoA + L-lysyl-[protein] = N(6)-(2E)-butenoyl-L-lysyl-[protein] + CoA + H(+). Histone acetyltransferase that acetylates histone H2B to form H2BK11ac and H2BK16ac, histone H3 to form H3K9ac, H3K14ac, H3K18ac, H3K23ac, H3K27ac and H3K36ac, with a lower preference histone H4 to form H4K8ac and H4K16ac, and contributes to H2A.Z acetylation. Acetylation of histones gives a specific tag for epigenetic transcription activation and elongation. Operates in concert with certain DNA-binding transcriptional activators such as GCN4 or HAP2/3/4. Its acetyltransferase activity seems to be dependent on the association in different multisubunit complexes. Component of the transcription coactivator SAGA complex. SAGA acts as a general cofactor required for essentially all RNA polymerase II transcription. At the promoters, SAGA is required for transcription pre-initiation complex (PIC) recruitment. It influences RNA polymerase II transcriptional activity through different activities such as TBP interaction (via core/TAF module) and promoter selectivity, interaction with transcription activators (via Tra1/SPT module), and chromatin modification through histone acetylation (via HAT module) and deubiquitination (via DUB module). SAGA preferentially acetylates histones H3 (to form H3K9ac, H3K14ac, H3K18ac and H3K23ac) and H2B and deubiquitinates histone H2B. SAGA interacts with DNA via upstream activating sequences (UASs). Also identified in a modified version of SAGA named SALSA or SLIK. The cleavage of SPT7 and the absence of the SPT8 subunit in SLIK neither drive any major conformational differences in its structure compared with SAGA, nor significantly affect HAT, DUB, or DNA-binding activities. Component of the ADA histone acetyltransferase complex, which preferentially acetylates nucleosomal histones H3 (to form H3K14ac and H3K18ac) and H2B. In addition to histone acetyltransferase, can use different acyl-CoA substrates, such as (2E)-butenoyl-CoA (crotonyl-CoA) and is able to mediate histone crotonylation. Controls the metaphase-to-anaphase transition and is required for correct chromosome segregation and centromere/kinetochore function in mitosis. May be involved in response to DNA damage by genotoxic agents. The protein is Histone acetyltransferase GCN5 of Saccharomyces cerevisiae (strain ATCC 204508 / S288c) (Baker's yeast).